A 504-amino-acid polypeptide reads, in one-letter code: 26S proteasome non-ATPase regulatory subunit 3 (504 aa).

The 181-residue stretch at 254–434 (ARYFYYQGRI…GYLQSRENID (181 aa)) folds into the PCI domain. The disordered stretch occupies residues 485–504 (KEEMERQAEESSDNEGDSDF). The segment covering 494–504 (ESSDNEGDSDF) has biased composition (acidic residues).

The protein belongs to the proteasome subunit S3 family. As to quaternary structure, the 26S proteasome is composed of a core protease, known as the 20S proteasome, capped at one or both ends by the 19S regulatory complex (RC). The RC is composed of at least 18 different subunits in two subcomplexes, the base and the lid, which form the portions proximal and distal to the 20S proteolytic core, respectively.

Its function is as follows. Acts as a regulatory subunit of the 26 proteasome which is involved in the ATP-dependent degradation of ubiquitinated proteins. The chain is 26S proteasome non-ATPase regulatory subunit 3 (psmD3) from Dictyostelium discoideum (Social amoeba).